A 349-amino-acid polypeptide reads, in one-letter code: Isopentenyl-diphosphate delta-isomerase (349 aa).

Substrate is bound at residue 6–7 (RK). Residues 62–64 (AMT), Ser-93, and Asn-122 each bind FMN. Gln-152 contacts substrate. Glu-153 contributes to the Mg(2+) binding site. FMN contacts are provided by residues Lys-184, Thr-214, 258–259 (GG), and 280–281 (AG).

Belongs to the IPP isomerase type 2 family. As to quaternary structure, homooctamer. Dimer of tetramers. The cofactor is FMN. NADPH is required as a cofactor. Mg(2+) serves as cofactor.

It is found in the cytoplasm. It catalyses the reaction isopentenyl diphosphate = dimethylallyl diphosphate. In terms of biological role, involved in the biosynthesis of isoprenoids. Catalyzes the 1,3-allylic rearrangement of the homoallylic substrate isopentenyl (IPP) to its allylic isomer, dimethylallyl diphosphate (DMAPP). This Bacillus thuringiensis subsp. konkukian (strain 97-27) protein is Isopentenyl-diphosphate delta-isomerase.